The chain runs to 862 residues: Probable disease resistance protein At5g43740 (862 aa).

A coiled-coil region spans residues 24-61; sequence RNYIHMMESNLDALQKTMEELKNGRDDLLGRVSIEEDK. One can recognise an NB-ARC domain in the interval 135–438; sequence MVAQEIIHKV…CEGFINPNRY (304 aa). 178–185 is an ATP binding site; sequence GMGGVGKT. LRR repeat units lie at residues 511 to 532, 533 to 555, 558 to 580, and 582 to 604; these read IVRT…SKCP, NLST…FFRF, KLVV…ISNL, and SLQY…KKLR.

The protein belongs to the disease resistance NB-LRR family.

In terms of biological role, probable disease resistance protein. This is Probable disease resistance protein At5g43740 from Arabidopsis thaliana (Mouse-ear cress).